A 315-amino-acid chain; its full sequence is B3 domain-containing protein At1g05920 (315 aa).

A disordered region spans residues 24-129 (MISRDNQKKT…PQVASVPKSV (106 aa)). Composition is skewed to basic and acidic residues over residues 39–51 (VREEKGKRREEMI), 66–83 (KEGKGKRREEMISRDNRT), and 100–114 (FDHVPRGTREPHAYL). The segment at residues 204–306 (INTVIQNDFL…ILCFALVPPT (103 aa)) is a DNA-binding region (TF-B3).

The protein localises to the nucleus. This is B3 domain-containing protein At1g05920 from Arabidopsis thaliana (Mouse-ear cress).